We begin with the raw amino-acid sequence, 290 residues long: Fructokinase (290 aa).

Thr-130 lines the ATP pocket. Zn(2+) is bound by residues His-153, Cys-169, His-172, and Cys-175. ATP-binding positions include Pro-183 and 231-235 (GVMEK).

The protein belongs to the ROK (NagC/XylR) family. In terms of assembly, homodimer. Requires Mg(2+) as cofactor.

The catalysed reaction is D-fructose + ATP = D-fructose 6-phosphate + ADP + H(+). Inactivated by EDTA. Inhibition by zinc ions (Potential). This chain is Fructokinase (scrK), found in Lactococcus lactis subsp. cremoris (Streptococcus cremoris).